Here is a 160-residue protein sequence, read N- to C-terminus: MGDVVADALEKLSADQIEQFRKYFNMFDKEGKGYIRATQVGQILRTMGQAFEERDLKQLIKEFDADGSGEIEFEEFAAMVANFVVNNENDEGLEEELREAFRLYDKEGNGYINVSDLRDILRALDDNVSEEELDEMIAEIDADGSGTVDFDEFMEMMSGE.

EF-hand domains are found at residues 15–50, 51–86, 92–127, and 128–160; these read DQIE…MGQA, FEER…FVVN, GLEE…LDDN, and VSEE…MSGE. Ca(2+) contacts are provided by aspartate 64, aspartate 66, serine 68, glutamate 70, and glutamate 75. Residues aspartate 141, aspartate 143, serine 145, threonine 147, and glutamate 152 each contribute to the Ca(2+) site.

This sequence belongs to the troponin C family. Pharyngeal muscle.

The polypeptide is Troponin C, isoform 2 (tnc-2) (Caenorhabditis elegans).